The following is a 202-amino-acid chain: Orotate phosphoribosyltransferase (202 aa).

Residues lysine 93 and 113–121 (EDIITTGGS) contribute to the 5-phospho-alpha-D-ribose 1-diphosphate site. Orotate is bound by residues threonine 117 and arginine 145.

This sequence belongs to the purine/pyrimidine phosphoribosyltransferase family. PyrE subfamily. In terms of assembly, homodimer. It depends on Mg(2+) as a cofactor.

It carries out the reaction orotidine 5'-phosphate + diphosphate = orotate + 5-phospho-alpha-D-ribose 1-diphosphate. Its pathway is pyrimidine metabolism; UMP biosynthesis via de novo pathway; UMP from orotate: step 1/2. In terms of biological role, catalyzes the transfer of a ribosyl phosphate group from 5-phosphoribose 1-diphosphate to orotate, leading to the formation of orotidine monophosphate (OMP). The polypeptide is Orotate phosphoribosyltransferase (Campylobacter fetus subsp. fetus (strain 82-40)).